We begin with the raw amino-acid sequence, 775 residues long: Outer capsid protein VP4 (775 aa).

The segment at Leu-65–Leu-223 is spike head. Positions Ala-247–Asp-478 are spike body and stalk (antigen domain). The DGE motif; interaction with ITGA2/ITGB1 heterodimer signature appears at Asp-307 to Glu-309. A disulfide bridge links Cys-317 with Cys-379. The interval Ile-388–Val-408 is hydrophobic; possible role in virus entry into host cell. A YGL motif; interaction with ITGA4 motif is present at residues Tyr-447–Leu-449. The stretch at Ile-483–Glu-510 forms a coiled coil. The interval Gln-509 to Leu-775 is spike foot. Residues Lys-643 to Asp-645 carry the KID motif; interaction with HSPA8 motif.

The protein belongs to the rotavirus VP4 family. Homotrimer. VP4 adopts a dimeric appearance above the capsid surface, while forming a trimeric base anchored inside the capsid layer. Only hints of the third molecule are observed above the capsid surface. It probably performs a series of molecular rearrangements during viral entry. Prior to trypsin cleavage, it is flexible. The priming trypsin cleavage triggers its rearrangement into rigid spikes with approximate two-fold symmetry of their protruding parts. After an unknown second triggering event, cleaved VP4 may undergo another rearrangement, in which two VP5* subunits fold back on themselves and join a third subunit to form a tightly associated trimer, shaped like a folded umbrella. Interacts with VP6. Interacts with VP7. As to quaternary structure, homotrimer. The trimer is coiled-coil stabilized by its C-terminus, however, its N-terminus, known as antigen domain or 'body', seems to be flexible allowing it to self-associate either as a dimer or a trimer. Post-translationally, proteolytic cleavage by trypsin results in activation of VP4 functions and greatly increases infectivity. The penetration into the host cell is dependent on trypsin treatment of VP4. It produces two peptides, VP5* and VP8* that remain associated with the virion. Cleavage of VP4 by trypsin probably occurs in vivo in the lumen of the intestine prior to infection of enterocytes. Trypsin seems to be incorporated into the three-layered viral particles but remains inactive as long as the viral outer capsid is intact and would only be activated upon the solubilization of the latter.

It localises to the virion. The protein localises to the host rough endoplasmic reticulum. The protein resides in the host cell membrane. Its subcellular location is the host cytoplasm. It is found in the host cytoskeleton. It localises to the host endoplasmic reticulum-Golgi intermediate compartment. Spike-forming protein that mediates virion attachment to the host epithelial cell receptors and plays a major role in cell penetration, determination of host range restriction and virulence. Rotavirus attachment and entry into the host cell probably involves multiple sequential contacts between the outer capsid proteins VP4 and VP7, and the cell receptors. It is subsequently lost, together with VP7, following virus entry into the host cell. Following entry into the host cell, low intracellular or intravesicular Ca(2+) concentration probably causes the calcium-stabilized VP7 trimers to dissociate from the virion. This step is probably necessary for the membrane-disrupting entry step and the release of VP4, which is locked onto the virion by VP7. During the virus exit from the host cell, VP4 seems to be required to target the newly formed virions to the host cell lipid rafts. Functionally, forms the spike 'foot' and 'body' and acts as a membrane permeabilization protein that mediates release of viral particles from endosomal compartments into the cytoplasm. During entry, the part of VP5* that protrudes from the virus folds back on itself and reorganizes from a local dimer to a trimer. This reorganization may be linked to membrane penetration by exposing VP5* hydrophobic region. In integrin-dependent strains, VP5* targets the integrin heterodimer ITGA2/ITGB1 for cell attachment. Its function is as follows. Forms the head of the spikes and mediates the recognition of specific host cell surface glycans. It is the viral hemagglutinin and an important target of neutralizing antibodies. In sialic acid-dependent strains, VP8* binds to host cell sialic acid, most probably a ganglioside, providing the initial contact. In some other strains, VP8* mediates the attachment to histo-blood group antigens (HBGAs) for viral entry. In Rotavirus A (strain RVA/Human/Japan/MO/1982/G3P1A[8]) (RV-A), this protein is Outer capsid protein VP4.